Consider the following 268-residue polypeptide: Casein kinase II subunit beta (268 aa).

The interval 222–268 (LSNNNQNNQNNNINNNNNNNNNNNNNNNNNNNNQQNNNNQQNNNTNK) is disordered. A compositionally biased stretch (low complexity) spans 224–268 (NNNQNNQNNNINNNNNNNNNNNNNNNNNNNNQQNNNNQQNNNTNK).

The protein belongs to the casein kinase 2 subunit beta family. In terms of assembly, casein kinase II/CK2 is a tetramer composed of two alpha subunit and two beta subunits.

Regulatory subunit of casein kinase II/CK2. As part of the kinase complex regulates the basal catalytic activity of the alpha subunit a constitutively active serine/threonine-protein kinase that phosphorylates a large number of substrates containing acidic residues C-terminal to the phosphorylated serine or threonine. The sequence is that of Casein kinase II subunit beta (csnk2b) from Dictyostelium discoideum (Social amoeba).